The sequence spans 292 residues: Ribose import binding protein RbsB (292 aa).

The N-terminal stretch at 1–23 (MKKLTALTSAVLLGLAVSSSASA) is a signal peptide.

It belongs to the bacterial solute-binding protein 2 family. The complex is composed of an ATP-binding protein (RbsA), two transmembrane proteins (RbsC) and a solute-binding protein (RbsB).

Its subcellular location is the periplasm. Functionally, part of the ABC transporter complex RbsABC involved in ribose import. Binds ribose. The polypeptide is Ribose import binding protein RbsB (rbsB) (Haemophilus influenzae (strain ATCC 51907 / DSM 11121 / KW20 / Rd)).